The following is a 199-amino-acid chain: Glycerol-3-phosphate acyltransferase (199 aa).

5 helical membrane-spanning segments follow: residues Ile3–Val23, Val55–Ile75, Phe79–Leu99, Val113–Phe133, and Tyr155–Ile175.

The protein belongs to the PlsY family. In terms of assembly, probably interacts with PlsX.

The protein localises to the cell inner membrane. The enzyme catalyses an acyl phosphate + sn-glycerol 3-phosphate = a 1-acyl-sn-glycero-3-phosphate + phosphate. The protein operates within lipid metabolism; phospholipid metabolism. In terms of biological role, catalyzes the transfer of an acyl group from acyl-phosphate (acyl-PO(4)) to glycerol-3-phosphate (G3P) to form lysophosphatidic acid (LPA). This enzyme utilizes acyl-phosphate as fatty acyl donor, but not acyl-CoA or acyl-ACP. This chain is Glycerol-3-phosphate acyltransferase, found in Endomicrobium trichonymphae.